Reading from the N-terminus, the 383-residue chain is ATP phosphoribosyltransferase regulatory subunit (383 aa).

The protein belongs to the class-II aminoacyl-tRNA synthetase family. HisZ subfamily. As to quaternary structure, heteromultimer composed of HisG and HisZ subunits.

It is found in the cytoplasm. It functions in the pathway amino-acid biosynthesis; L-histidine biosynthesis; L-histidine from 5-phospho-alpha-D-ribose 1-diphosphate: step 1/9. In terms of biological role, required for the first step of histidine biosynthesis. May allow the feedback regulation of ATP phosphoribosyltransferase activity by histidine. The protein is ATP phosphoribosyltransferase regulatory subunit of Desulfitobacterium hafniense (strain DSM 10664 / DCB-2).